Consider the following 678-residue polypeptide: THO complex subunit 5 homolog A (678 aa).

Disordered regions lie at residues Met-1–Glu-35 and Ala-294–Asp-329. A Nuclear localization signal motif is present at residues Lys-7–Lys-10. Residues Asn-14–Glu-35 show a composition bias toward basic and acidic residues. The segment covering Asp-301–Glu-314 has biased composition (acidic residues).

It belongs to the THOC5 family. Component of the THO subcomplex, which is composed of thoc1, thoc2, thoc3, thoc5, thoc6 and thoc7. Component of the transcription/export (TREX) complex at least composed of alyref/thoc4, ddx39b, sarnp/cip29, chtop and the THO subcomplex. Interacts with thoc7.

The protein resides in the nucleus. Its subcellular location is the nucleus speckle. The protein localises to the cytoplasm. Functionally, component of the THO subcomplex of the TREX complex which is thought to couple mRNA transcription, processing and nuclear export, and which specifically associates with spliced mRNA and not with unspliced pre-mRNA. Plays a key structural role in the oligomerization of the THO-ddx39b complex. TREX is recruited to spliced mRNAs by a transcription-independent mechanism, binds to mRNA upstream of the exon-junction complex (EJC) and is recruited in a splicing- and cap-dependent manner to a region near the 5' end of the mRNA where it functions in mRNA export to the cytoplasm via the TAP/NXF1 pathway. May be involved in cell differentiation. In Xenopus laevis (African clawed frog), this protein is THO complex subunit 5 homolog A (thoc5-a).